Consider the following 461-residue polypeptide: MPSVAIAGAGLVGALNACFFAQKGWDVSVYEFRKDIRTMKHVQGRSINLALSQRGKSALEAVGLKEYIVNQGVPLYARLIHNKDGKTYSRQPYGKPGEHIVSINRRHLNEVMITQAEKSPNVKFFFEHKVKNVDYDKKQLVVQCTSQPSKIPTFGNKSPPQEHAEFHVEADLILACDGAYSAVRRSLMTIPRFDFSQEYIEHGYVELNIMANNNEFAFEENVFHLWPRGHFTLIALANRDKTFTVTIFAPFSEFEKHMSTSEDVLSFFEENFPDAFLLLGKEHIADTFNRVKPQPLVSIKCSPHSFFDNLVLMGDAAHAMVPFYGQGMNCGFEDCLVFSETLEEYGNDIAKAVKVYSDGRVNDAHSINDLAMYNYEELKDLVNKSSYKLRKKFDTIMNSIFPKSWIPLYSMVTFSRIPYSEVIERRKRQDKILSRIMTTTSTLALIGAAAGIYVNRGKLGL.

The next 2 helical transmembrane spans lie at 395–415 and 432–452; these read TIMN…VTFS and ILSR…AAGI.

The protein belongs to the aromatic-ring hydroxylase family. KMO subfamily. FAD serves as cofactor.

The protein resides in the mitochondrion. Its subcellular location is the membrane. The catalysed reaction is L-kynurenine + NADPH + O2 + H(+) = 3-hydroxy-L-kynurenine + NADP(+) + H2O. Its pathway is cofactor biosynthesis; NAD(+) biosynthesis; quinolinate from L-kynurenine: step 1/3. Functionally, catalyzes the hydroxylation of L-kynurenine (L-Kyn) to form 3-hydroxy-L-kynurenine (L-3OHKyn). Required for synthesis of quinolinic acid. This chain is Kynurenine 3-monooxygenase, found in Caenorhabditis elegans.